Here is a 212-residue protein sequence, read N- to C-terminus: Orotate phosphoribosyltransferase (212 aa).

5-phospho-alpha-D-ribose 1-diphosphate is bound by residues R97, K101, H103, and 123 to 131 (EDLISTGGS). S127 serves as a coordination point for orotate.

This sequence belongs to the purine/pyrimidine phosphoribosyltransferase family. PyrE subfamily. In terms of assembly, homodimer. Requires Mg(2+) as cofactor.

It catalyses the reaction orotidine 5'-phosphate + diphosphate = orotate + 5-phospho-alpha-D-ribose 1-diphosphate. It functions in the pathway pyrimidine metabolism; UMP biosynthesis via de novo pathway; UMP from orotate: step 1/2. Its function is as follows. Catalyzes the transfer of a ribosyl phosphate group from 5-phosphoribose 1-diphosphate to orotate, leading to the formation of orotidine monophosphate (OMP). The chain is Orotate phosphoribosyltransferase from Phocaeicola vulgatus (strain ATCC 8482 / DSM 1447 / JCM 5826 / CCUG 4940 / NBRC 14291 / NCTC 11154) (Bacteroides vulgatus).